The following is a 496-amino-acid chain: Glutamate--tRNA ligase (496 aa).

A 'HIGH' region motif is present at residues 11–21 (PSPTGLLHIGN). The short motif at 255-259 (KLSKR) is the 'KMSKS' region element. ATP is bound at residue K258.

The protein belongs to the class-I aminoacyl-tRNA synthetase family. Glutamate--tRNA ligase type 1 subfamily. As to quaternary structure, monomer.

The protein resides in the cytoplasm. The catalysed reaction is tRNA(Glu) + L-glutamate + ATP = L-glutamyl-tRNA(Glu) + AMP + diphosphate. Its function is as follows. Catalyzes the attachment of glutamate to tRNA(Glu) in a two-step reaction: glutamate is first activated by ATP to form Glu-AMP and then transferred to the acceptor end of tRNA(Glu). The protein is Glutamate--tRNA ligase of Streptococcus pyogenes serotype M49 (strain NZ131).